A 175-amino-acid chain; its full sequence is ADP-ribosylation factor 6 (175 aa).

The N-myristoyl glycine moiety is linked to residue Gly-2. Lys-3 carries the N6-myristoyl lysine lipid modification. Residues 23–28 (AAGKTT), 41–44 (TIPT), 63–67 (DVGGQ), 122–125 (NKQD), and 155–156 (CA) each bind GTP.

The protein belongs to the small GTPase superfamily. Arf family. Interacts (when activated) with GGA1, GGA2 and GGA3; the interaction is required for proper subcellular location of GGA1, GGA2 and GGA3. Interacts with PIP5K1C. Interacts with USP6 (via Rab-GAP TBC domain). Interacts with RAB11FIP3 and RAB11FIP4. Interacts with HERC1. Interacts with ARHGAP21. Interacts with ASAP3; the interaction is stabilized by calcium ions. Interacts with NCS1/FREQ at the plasma membrane. Interacts with TBC1D24. Interacts with ECPAS. Interacts with MICALL1. Interacts with SPAG9 homodimers, forming heterotetramers. Interacts with CYTH3. Interacts with ASAP2. Interacts with UACA. Interacts with KIF23, forming heterodimers and heterotetramers. Interacts with C9orf72. Interacts (GTP-bound form) with TJAP1/PILT. Interacts with PRKAA2. Interacts with CD36 (when palmitoylated); this interaction mediates CD36 transport from the Golgi to the plasma membrane. Interacts with APBB1. In terms of assembly, (Microbial infection) Interacts with the V.cholerae enterotoxin subunit A1; this causes a conformation change so that the toxin can bind NAD and catalyze the ADP-ribosylation of Gs alpha. As to quaternary structure, (Microbial infection) Interacts with EspG from enteropathogenic E.coli. (Microbial infection) Identified in a complex with RAB1A and EspG from enteropathogenic E.coli. In terms of assembly, (Microbial infection) Interacts with human enterovirus 71 protein VP1. In terms of processing, GTP-bound form is myristoylated on Lys-3 by NMT1 and NMT2, allowing ARF6 to remain on membranes during the GTPase cycle, thereby promoting its activity. GDP-bound inactive form is demyristoylated on Lys-3 by SIRT2 at early endosomes or endocytic recycling compartment to allow its efficient activation by a guanine exchange factor (GEF) after GDP release. Ubiquitous, with higher levels in heart, substantia nigra, and kidney.

The protein resides in the cytoplasm. It localises to the cytosol. Its subcellular location is the cell membrane. The protein localises to the endosome membrane. It is found in the recycling endosome membrane. The protein resides in the cell projection. It localises to the filopodium membrane. Its subcellular location is the ruffle. The protein localises to the cleavage furrow. It is found in the midbody. The protein resides in the midbody ring. It localises to the early endosome membrane. Its subcellular location is the golgi apparatus. The protein localises to the trans-Golgi network membrane. The enzyme catalyses GTP + H2O = GDP + phosphate + H(+). Its activity is regulated as follows. Activation is generally mediated by a guanine exchange factor (GEF), while inactivation through hydrolysis of bound GTP is catalyzed by a GTPase activating protein (GAP). Activated by ASAP3. Inactivated by ACAP1 and ACAP2. Activated by NGF via NTRK1. Activated by PRKAA2 through its C-terminal regulatory domain. Functionally, GTP-binding protein involved in protein trafficking that regulates endocytic recycling and cytoskeleton remodeling. GTP-bound form plays an important role in the transport of multiple palmitoylated proteins form the Golgi to the plasma membrane. Required for normal completion of mitotic cytokinesis. Plays a role in the reorganization of the actin cytoskeleton and the formation of stress fibers. Involved in the regulation of dendritic spine development, contributing to the regulation of dendritic branching and filopodia extension. Potentiates the neurite outgrowth in primary neurons by interacting with the molecular adapter APBB1. Plays an important role in membrane trafficking, during junctional remodeling and epithelial polarization. Regulates surface levels of adherens junction proteins such as CDH1. Required for NTRK1 sorting to the recycling pathway from early endosomes. In terms of biological role, (Microbial infection) Functions as an allosteric activator of the cholera toxin catalytic subunit, an ADP-ribosyltransferase. (Microbial infection) Plays a key role in the endocytosis of enterovirus 71 and thus viral entry into brain microvascular endothelial cells. The protein is ADP-ribosylation factor 6 of Homo sapiens (Human).